The chain runs to 199 residues: N-(5'-phosphoribosyl)anthranilate isomerase (199 aa).

The protein belongs to the TrpF family.

The catalysed reaction is N-(5-phospho-beta-D-ribosyl)anthranilate = 1-(2-carboxyphenylamino)-1-deoxy-D-ribulose 5-phosphate. Its pathway is amino-acid biosynthesis; L-tryptophan biosynthesis; L-tryptophan from chorismate: step 3/5. The protein is N-(5'-phosphoribosyl)anthranilate isomerase of Campylobacter jejuni subsp. jejuni serotype O:6 (strain 81116 / NCTC 11828).